The following is a 155-amino-acid chain: Small ribosomal subunit protein uS7cz/uS7cy (155 aa).

This sequence belongs to the universal ribosomal protein uS7 family. In terms of assembly, part of the 30S ribosomal subunit.

The protein resides in the plastid. Its subcellular location is the chloroplast. Its function is as follows. One of the primary rRNA binding proteins, it binds directly to 16S rRNA where it nucleates assembly of the head domain of the 30S subunit. This is Small ribosomal subunit protein uS7cz/uS7cy (rps7-A) from Lactuca sativa (Garden lettuce).